We begin with the raw amino-acid sequence, 330 residues long: DNA-directed RNA polymerase subunit alpha (330 aa).

The interval 1 to 225 (MSDLAIPTIS…KQFASLVSHS (225 aa)) is alpha N-terminal domain (alpha-NTD). Positions 237-330 (VKYTIPEEKY…KKKNKGIDED (94 aa)) are alpha C-terminal domain (alpha-CTD).

Belongs to the RNA polymerase alpha chain family. As to quaternary structure, homodimer. The RNAP catalytic core consists of 2 alpha, 1 beta, 1 beta' and 1 omega subunit. When a sigma factor is associated with the core the holoenzyme is formed, which can initiate transcription.

It carries out the reaction RNA(n) + a ribonucleoside 5'-triphosphate = RNA(n+1) + diphosphate. Its function is as follows. DNA-dependent RNA polymerase catalyzes the transcription of DNA into RNA using the four ribonucleoside triphosphates as substrates. The protein is DNA-directed RNA polymerase subunit alpha of Dehalococcoides mccartyi (strain CBDB1).